The chain runs to 240 residues: Protein OPG176 (240 aa).

Belongs to the orthopoxvirus OPG176 family. As to quaternary structure, tetramer. Interacts with host MYD88, TRF4, TICAM2 and MAL.

Functionally, BCL2-like protein which disrupts the host immune response by inhibiting the TLR4 signaling pathway leading to NF-kappa-B activation. Acts close to the plasma membrane and targets several host TIR-domain containing adapter proteins including MYD88, TIRAP, TRIF and TICAM2. In turn, blocks the host NF-kappa-B and TRIF-mediated IRF3 activation. The protein is Protein OPG176 (OPG176) of Cynomys gunnisoni (Gunnison's prairie dog).